Reading from the N-terminus, the 56-residue chain is uncharacterized protein (56 aa).

This is an uncharacterized protein from Escherichia coli (strain K12).